The following is a 183-amino-acid chain: TATA box-binding protein-like 1 (183 aa).

Belongs to the TBP family. As to quaternary structure, binds TFIIA and TFIIB. In terms of tissue distribution, present in the brain, heart, liver and gizzard.

The protein resides in the cytoplasm. The protein localises to the nucleus. Functionally, part of a specialized transcription system that mediates the transcription of most ribosomal proteins through the 5'-TCT-3' motif which is a core promoter element at these genes. Seems to also mediate the transcription of NF1. Does not bind the TATA box. The polypeptide is TATA box-binding protein-like 1 (TBPL1) (Gallus gallus (Chicken)).